We begin with the raw amino-acid sequence, 99 residues long: UPF0473 protein Athe_1150 (99 aa).

The protein belongs to the UPF0473 family.

The protein is UPF0473 protein Athe_1150 of Caldicellulosiruptor bescii (strain ATCC BAA-1888 / DSM 6725 / KCTC 15123 / Z-1320) (Anaerocellum thermophilum).